The following is a 264-amino-acid chain: Ribosomal RNA small subunit methyltransferase A (264 aa).

S-adenosyl-L-methionine contacts are provided by Asn15, Ile17, Gly42, Glu64, Asp90, and Asn109.

The protein belongs to the class I-like SAM-binding methyltransferase superfamily. rRNA adenine N(6)-methyltransferase family. RsmA subfamily.

The protein resides in the cytoplasm. The enzyme catalyses adenosine(1518)/adenosine(1519) in 16S rRNA + 4 S-adenosyl-L-methionine = N(6)-dimethyladenosine(1518)/N(6)-dimethyladenosine(1519) in 16S rRNA + 4 S-adenosyl-L-homocysteine + 4 H(+). In terms of biological role, specifically dimethylates two adjacent adenosines (A1518 and A1519) in the loop of a conserved hairpin near the 3'-end of 16S rRNA in the 30S particle. May play a critical role in biogenesis of 30S subunits. In Wolbachia pipientis subsp. Culex pipiens (strain wPip), this protein is Ribosomal RNA small subunit methyltransferase A.